We begin with the raw amino-acid sequence, 88 residues long: Large ribosomal subunit protein bL27 (88 aa).

Positions 1–25 (MAHKKGASSSSNGRDSEAKRLGVKR) are disordered.

Belongs to the bacterial ribosomal protein bL27 family.

The chain is Large ribosomal subunit protein bL27 from Corynebacterium diphtheriae (strain ATCC 700971 / NCTC 13129 / Biotype gravis).